Reading from the N-terminus, the 378-residue chain is D-galactarolactone cycloisomerase (378 aa).

Mg(2+) is bound by residues Asp194, Glu220, and Glu246. His296 (proton acceptor) is an active-site residue.

The protein belongs to the mandelate racemase/muconate lactonizing enzyme family. In terms of assembly, homooctamer. The cofactor is Mg(2+).

The catalysed reaction is D-glucaro-1,4-lactone = 5-dehydro-4-deoxy-D-glucarate + H(+). It catalyses the reaction D-galactaro-1,4-lactone = 5-dehydro-4-deoxy-D-glucarate + H(+). It participates in carbohydrate acid metabolism; D-galacturonate degradation via prokaryotic oxidative pathway. Functionally, catalyzes the ring opening of D-galactaro-1,4-lactone to yield 5-keto-4-deoxy-D-glucarate (KDG) via a beta-elimination reaction. This is a step in the oxidative degradation pathway of D-galacturonate, which allows A.tumefaciens to utilize D-galacturonate as a sole carbon source. To a lesser extent, can also use D-glucaro-1,4-lactone as substrate to produce KDG, but cannot use D-galactaro-1,5-lactone, D-glucaro-6,3-lactone and linear D-glucarate. This Agrobacterium fabrum (strain C58 / ATCC 33970) (Agrobacterium tumefaciens (strain C58)) protein is D-galactarolactone cycloisomerase (gci).